A 979-amino-acid chain; its full sequence is UPF0182 protein Rv0064 (979 aa).

7 helical membrane-spanning segments follow: residues 19–41, 63–85, 114–136, 174–196, 208–230, 261–280, and 285–307; these read LVTA…DIYV, LAIV…LLAY, LFGW…FDWV, WLFV…FGGL, AARV…AYWL, LVLV…AIFL, and IPAM…WPLL. The segment at 898–948 is disordered; the sequence is GTGRVATARGGDAASAPPPGAGGPAPPQAVPPPRTTQPPAAPPRGPDVPPA. Over residues 913 to 946 the composition is skewed to pro residues; sequence APPPGAGGPAPPQAVPPPRTTQPPAAPPRGPDVP.

This sequence belongs to the UPF0182 family.

The protein localises to the cell membrane. The chain is UPF0182 protein Rv0064 from Mycobacterium tuberculosis (strain ATCC 25618 / H37Rv).